The primary structure comprises 1186 residues: Trafficking protein particle complex II-specific subunit 120 homolog (1186 aa).

Disordered stretches follow at residues 777-824 (PTDS…EKES) and 964-984 (TKDP…SEKN). Residues 779–792 (DSDNTMSSGRNAAG) are compositionally biased toward polar residues. Position 971 is a phosphoserine (Ser971). Residues 972–981 (PSSSRNPSFS) are compositionally biased toward low complexity.

The protein belongs to the TRS120 family. Part of the multisubunit TRAPP (transport protein particle) II complex composed of BET3, BET5, TRS20, TRS23, TRS31, TRS33, TRS65, TRS85, TRS120 and TRS130. Expressed in roots, leaves, stems and flowers.

It localises to the golgi apparatus. It is found in the trans-Golgi network. The protein resides in the early endosome. Functionally, specific subunit of the TRAPP II complex, a highly conserved vesicle tethering complex that is required for the proper transport of proteins in post-Golgi trafficking pathways to the growing cell plate in mitotic active cells. Required for the polarized and selective transport of PIN2 and probably PIN1 to the plasma membrane. Not required for ER-to-Golgi as well as biosynthetic and endocytic vacuolar transport. In Arabidopsis thaliana (Mouse-ear cress), this protein is Trafficking protein particle complex II-specific subunit 120 homolog.